Reading from the N-terminus, the 604-residue chain is Glutamine--fructose-6-phosphate aminotransferase [isomerizing] (604 aa).

Cys2 serves as the catalytic Nucleophile; for GATase activity. The Glutamine amidotransferase type-2 domain occupies 2 to 218 (CGIVGVVGNR…DKELVILTKD (217 aa)). SIS domains follow at residues 284-423 (IVKT…ANGK) and 456-594 (VEKL…VDKP). Residue Lys599 is the For Fru-6P isomerization activity of the active site.

In terms of assembly, homodimer.

The protein resides in the cytoplasm. It carries out the reaction D-fructose 6-phosphate + L-glutamine = D-glucosamine 6-phosphate + L-glutamate. Functionally, catalyzes the first step in hexosamine metabolism, converting fructose-6P into glucosamine-6P using glutamine as a nitrogen source. The sequence is that of Glutamine--fructose-6-phosphate aminotransferase [isomerizing] from Streptococcus pyogenes serotype M6 (strain ATCC BAA-946 / MGAS10394).